We begin with the raw amino-acid sequence, 351 residues long: Small ribosomal subunit protein uS2 (351 aa).

The tract at residues Gln302–Asn351 is disordered. Basic and acidic residues predominate over residues Thr340–Asn351.

It belongs to the universal ribosomal protein uS2 family.

The polypeptide is Small ribosomal subunit protein uS2 (Ureaplasma urealyticum serovar 10 (strain ATCC 33699 / Western)).